We begin with the raw amino-acid sequence, 834 residues long: Protein kintoun (834 aa).

Disordered stretches follow at residues 214-239 (TAEE…KQEP), 374-415 (SRED…SVAP), 547-669 (KGKV…STGR), and 759-834 (KKNQ…EMDD). At serine 378 the chain carries Phosphoserine. Acidic residues predominate over residues 389–398 (PVEEDPDGEL). A compositionally biased stretch (basic and acidic residues) spans 552–571 (AKKDNAPLDVKFERNQEGHA). The span at 582–596 (EEEEDKENQDQEPES) shows a compositional bias: acidic residues. Over residues 597 to 607 (DQQQQQQVQNK) the composition is skewed to low complexity. Composition is skewed to basic residues over residues 608–619 (KPGKKQRKKNKK) and 759–773 (KKNQ…RAQQ). Serine 777 is subject to Phosphoserine. Residues 785-798 (EETRGSALKQEENP) show a composition bias toward basic and acidic residues.

Belongs to the PIH1 family. Kintoun subfamily. Interacts with Pp1alpha-96A, Pp1-87B, Pp1-13C and flw.

The protein localises to the cytoplasm. Its function is as follows. Required for cytoplasmic pre-assembly of axonemal dyneins, thereby playing a central role in motility in cilia and flagella. Involved in pre-assembly of dynein arm complexes in the cytoplasm before intraflagellar transport loads them for the ciliary compartment. This Drosophila melanogaster (Fruit fly) protein is Protein kintoun.